A 321-amino-acid chain; its full sequence is ATP-dependent 6-phosphofructokinase (321 aa).

Glycine 12 lines the ATP pocket. Residues 22–26 (RAVVR) and 55–60 (RYSVSD) contribute to the ADP site. ATP contacts are provided by residues 73-74 (RF) and 103-106 (GDGS). Aspartate 104 contacts Mg(2+). Substrate is bound at residue 127–129 (TID). Catalysis depends on aspartate 129, which acts as the Proton acceptor. Arginine 156 is a binding site for ADP. Residues arginine 164 and 171–173 (MGR) contribute to the substrate site. ADP-binding positions include 187 to 189 (GCE) and 215 to 217 (KRH). Residues glutamate 224, arginine 245, and 251–254 (HVQR) each bind substrate.

This sequence belongs to the phosphofructokinase type A (PFKA) family. ATP-dependent PFK group I subfamily. Prokaryotic clade 'B1' sub-subfamily. Homotetramer. It depends on Mg(2+) as a cofactor.

It is found in the cytoplasm. It carries out the reaction beta-D-fructose 6-phosphate + ATP = beta-D-fructose 1,6-bisphosphate + ADP + H(+). It functions in the pathway carbohydrate degradation; glycolysis; D-glyceraldehyde 3-phosphate and glycerone phosphate from D-glucose: step 3/4. With respect to regulation, allosterically activated by ADP and other diphosphonucleosides, and allosterically inhibited by phosphoenolpyruvate. Catalyzes the phosphorylation of D-fructose 6-phosphate to fructose 1,6-bisphosphate by ATP, the first committing step of glycolysis. This Actinobacillus succinogenes (strain ATCC 55618 / DSM 22257 / CCUG 43843 / 130Z) protein is ATP-dependent 6-phosphofructokinase.